The chain runs to 142 residues: Large ribosomal subunit protein uL13 (142 aa).

It belongs to the universal ribosomal protein uL13 family. In terms of assembly, part of the 50S ribosomal subunit.

Functionally, this protein is one of the early assembly proteins of the 50S ribosomal subunit, although it is not seen to bind rRNA by itself. It is important during the early stages of 50S assembly. The polypeptide is Large ribosomal subunit protein uL13 (Mannheimia succiniciproducens (strain KCTC 0769BP / MBEL55E)).